Reading from the N-terminus, the 412-residue chain is Putative competence-damage inducible protein (412 aa).

It belongs to the CinA family.

In Bacillus cereus (strain G9842), this protein is Putative competence-damage inducible protein.